Reading from the N-terminus, the 600-residue chain is DNA ligase (600 aa).

D259 serves as a coordination point for ATP. The N6-AMP-lysine intermediate role is filled by K261. ATP contacts are provided by R266, R281, E311, F351, R428, and K434.

It belongs to the ATP-dependent DNA ligase family. Mg(2+) is required as a cofactor.

It catalyses the reaction ATP + (deoxyribonucleotide)n-3'-hydroxyl + 5'-phospho-(deoxyribonucleotide)m = (deoxyribonucleotide)n+m + AMP + diphosphate.. Functionally, DNA ligase that seals nicks in double-stranded DNA during DNA replication, DNA recombination and DNA repair. The protein is DNA ligase of Acidianus ambivalens (Desulfurolobus ambivalens).